Consider the following 152-residue polypeptide: Histone deacetylase complex subunit SAP18 (152 aa).

The segment at 1-38 (MAEAARRQGGGRPLPPPPRGVNQQPPRPKPEPVDREKT) is disordered. Residues 28–38 (PKPEPVDREKT) show a composition bias toward basic and acidic residues.

Belongs to the SAP18 family. In terms of assembly, interacts with SIN3, ERF3, ERF4 and HDA19. As to expression, ubiquitous, with low level in flowers.

Its function is as follows. Links the histone deacetylase complex to transcriptional repressors bound to chromatin. Involved in the tethering of the SIN3 complex to core histone proteins. This is Histone deacetylase complex subunit SAP18 from Arabidopsis thaliana (Mouse-ear cress).